Reading from the N-terminus, the 77-residue chain is ATP synthase subunit c (77 aa).

Helical transmembrane passes span 10–30 (IAVA…FGNM) and 57–77 (GLID…LFVL).

The protein belongs to the ATPase C chain family. In terms of assembly, F-type ATPases have 2 components, F(1) - the catalytic core - and F(0) - the membrane proton channel. F(1) has five subunits: alpha(3), beta(3), gamma(1), delta(1), epsilon(1). F(0) has three main subunits: a(1), b(2) and c(10-14). The alpha and beta chains form an alternating ring which encloses part of the gamma chain. F(1) is attached to F(0) by a central stalk formed by the gamma and epsilon chains, while a peripheral stalk is formed by the delta and b chains.

It is found in the cell inner membrane. In terms of biological role, f(1)F(0) ATP synthase produces ATP from ADP in the presence of a proton or sodium gradient. F-type ATPases consist of two structural domains, F(1) containing the extramembraneous catalytic core and F(0) containing the membrane proton channel, linked together by a central stalk and a peripheral stalk. During catalysis, ATP synthesis in the catalytic domain of F(1) is coupled via a rotary mechanism of the central stalk subunits to proton translocation. Key component of the F(0) channel; it plays a direct role in translocation across the membrane. A homomeric c-ring of between 10-14 subunits forms the central stalk rotor element with the F(1) delta and epsilon subunits. This chain is ATP synthase subunit c, found in Pseudoalteromonas translucida (strain TAC 125).